Reading from the N-terminus, the 200-residue chain is Recombination protein RecR (200 aa).

Residues 58-75 form a C4-type zinc finger; sequence CPDCFCLKTSKTSSCDFC. Positions 82-177 constitute a Toprim domain; that stretch reads SFLCIVATPK…KISRLALGMP (96 aa).

This sequence belongs to the RecR family.

May play a role in DNA repair. It seems to be involved in an RecBC-independent recombinational process of DNA repair. It may act with RecF and RecO. This chain is Recombination protein RecR, found in Chlamydia muridarum (strain MoPn / Nigg).